Consider the following 205-residue polypeptide: Adenylate kinase (205 aa).

10–15 (GAGKGT) lines the ATP pocket. Residues 30-59 (STGDMLRAAVAQGSEVGKVAEGIMARGELV) form an NMP region. Residues Thr-31, Arg-36, 57 to 59 (ELV), 85 to 88 (GFPR), and Gln-92 contribute to the AMP site. An LID region spans residues 126 to 139 (TRAAETAGGPRADD). Arg-127 is an ATP binding site. Residues Arg-136 and Arg-147 each coordinate AMP. Lys-175 provides a ligand contact to ATP.

It belongs to the adenylate kinase family. Monomer.

It localises to the cytoplasm. The enzyme catalyses AMP + ATP = 2 ADP. The protein operates within purine metabolism; AMP biosynthesis via salvage pathway; AMP from ADP: step 1/1. Its function is as follows. Catalyzes the reversible transfer of the terminal phosphate group between ATP and AMP. Plays an important role in cellular energy homeostasis and in adenine nucleotide metabolism. This Parvibaculum lavamentivorans (strain DS-1 / DSM 13023 / NCIMB 13966) protein is Adenylate kinase.